The following is a 477-amino-acid chain: UDP-N-acetylmuramate--L-alanine ligase (477 aa).

112–118 (GAHGKTT) provides a ligand contact to ATP.

The protein belongs to the MurCDEF family.

It localises to the cytoplasm. The catalysed reaction is UDP-N-acetyl-alpha-D-muramate + L-alanine + ATP = UDP-N-acetyl-alpha-D-muramoyl-L-alanine + ADP + phosphate + H(+). The protein operates within cell wall biogenesis; peptidoglycan biosynthesis. Its function is as follows. Cell wall formation. This is UDP-N-acetylmuramate--L-alanine ligase from Delftia acidovorans (strain DSM 14801 / SPH-1).